The following is a 163-amino-acid chain: Nucleotide-binding protein RHA1_ro01989 (163 aa).

This sequence belongs to the YajQ family.

In terms of biological role, nucleotide-binding protein. The polypeptide is Nucleotide-binding protein RHA1_ro01989 (Rhodococcus jostii (strain RHA1)).